Here is a 119-residue protein sequence, read N- to C-terminus: Large ribosomal subunit protein bL20 (119 aa).

It belongs to the bacterial ribosomal protein bL20 family.

Functionally, binds directly to 23S ribosomal RNA and is necessary for the in vitro assembly process of the 50S ribosomal subunit. It is not involved in the protein synthesizing functions of that subunit. The polypeptide is Large ribosomal subunit protein bL20 (Bacillus licheniformis (strain ATCC 14580 / DSM 13 / JCM 2505 / CCUG 7422 / NBRC 12200 / NCIMB 9375 / NCTC 10341 / NRRL NRS-1264 / Gibson 46)).